The primary structure comprises 197 residues: Rac-like GTP-binding protein RHO1 (197 aa).

Residue 13 to 20 (GDGAVGKT) participates in GTP binding. An Effector region motif is present at residues 35–43 (YVPTVFDNF). Residues 60-64 (DTAGQ) and 118-121 (TKLD) contribute to the GTP site. At cysteine 194 the chain carries Cysteine methyl ester. Cysteine 194 carries S-geranylgeranyl cysteine lipidation. The propeptide at 195 to 197 (SIL) is removed in mature form.

This sequence belongs to the small GTPase superfamily. Rho family.

The protein resides in the cytoplasm. Its subcellular location is the membrane. Functionally, inactive GDP-bound Rho GTPases reside in the cytosol, are found in a complex with Rho GDP-dissociation inhibitors (Rho GDIs), and are released from the GDI protein in order to translocate to membranes upon activation. In Beta vulgaris (Sugar beet), this protein is Rac-like GTP-binding protein RHO1 (RHO1).